Consider the following 309-residue polypeptide: tRNA pseudouridine synthase B (309 aa).

Catalysis depends on aspartate 39, which acts as the Nucleophile. The PUA domain occupies 229–306; the sequence is LPRVVVHQES…ERVLTLRKVF (78 aa).

Belongs to the pseudouridine synthase TruB family. Type 1 subfamily.

It catalyses the reaction uridine(55) in tRNA = pseudouridine(55) in tRNA. Its function is as follows. Responsible for synthesis of pseudouridine from uracil-55 in the psi GC loop of transfer RNAs. The chain is tRNA pseudouridine synthase B from Thermotoga maritima (strain ATCC 43589 / DSM 3109 / JCM 10099 / NBRC 100826 / MSB8).